We begin with the raw amino-acid sequence, 91 residues long: Small ribosomal subunit protein uS19 (91 aa).

Belongs to the universal ribosomal protein uS19 family.

In terms of biological role, protein S19 forms a complex with S13 that binds strongly to the 16S ribosomal RNA. In Prochlorococcus marinus (strain MIT 9515), this protein is Small ribosomal subunit protein uS19.